A 357-amino-acid chain; its full sequence is NADH-quinone oxidoreductase subunit H (357 aa).

A run of 8 helical transmembrane segments spans residues 20–40 (WLVV…ILCV), 92–112 (ILFI…WAVV), 127–147 (LLYV…AGWA), 165–185 (VSYE…SGSL), 206–226 (FLSW…ISAV), 268–288 (ILLS…PIDI), 294–314 (IPGW…FIWF), and 329–349 (LGWK…AIWM).

It belongs to the complex I subunit 1 family. As to quaternary structure, NDH-1 is composed of 14 different subunits. Subunits NuoA, H, J, K, L, M, N constitute the membrane sector of the complex.

Its subcellular location is the cell inner membrane. The enzyme catalyses a quinone + NADH + 5 H(+)(in) = a quinol + NAD(+) + 4 H(+)(out). Its function is as follows. NDH-1 shuttles electrons from NADH, via FMN and iron-sulfur (Fe-S) centers, to quinones in the respiratory chain. The immediate electron acceptor for the enzyme in this species is believed to be ubiquinone. Couples the redox reaction to proton translocation (for every two electrons transferred, four hydrogen ions are translocated across the cytoplasmic membrane), and thus conserves the redox energy in a proton gradient. This subunit may bind ubiquinone. This Bordetella avium (strain 197N) protein is NADH-quinone oxidoreductase subunit H.